We begin with the raw amino-acid sequence, 346 residues long: Protein PXR1 (346 aa).

Disordered stretches follow at residues 1–27 (MGLAAPKNKRKLGNDPNNTRWSRNTEN) and 146–315 (EDAE…QVSV). Residues 15-27 (DPNNTRWSRNTEN) show a composition bias toward polar residues. In terms of domain architecture, G-patch spans 25 to 79 (TENFGHRMLRSQGWEPGQYLGPQDASHAVYHTAASASHIKVALKEDNLGLGAKMN). Positions 215-230 (SKSKKSHKSKKEKKRR) are enriched in basic residues. Acidic residues predominate over residues 235–245 (ASDEQESEDEE). A compositionally biased stretch (basic residues) spans 249–274 (KRRKKEKKERKERRREKREKKLKKKQ). The span at 293 to 314 (GVDTGASTPVASGTSTPVSQVS) shows a compositional bias: polar residues.

This sequence belongs to the PINX1 family.

It is found in the nucleus. The protein localises to the nucleolus. Functionally, involved in rRNA-processing at A0, A1 and A2 sites and negatively regulates telomerase. This is Protein PXR1 (PXR1) from Pyricularia oryzae (strain 70-15 / ATCC MYA-4617 / FGSC 8958) (Rice blast fungus).